A 182-amino-acid polypeptide reads, in one-letter code: Flightin (182 aa).

The segment covering 1-15 has biased composition (acidic residues); sequence MADEEDPWGFDDGGE. The segment at 1-76 is disordered; that stretch reads MADEEDPWGF…PPPPEDDGYR (76 aa).

Several forms of flightin are thought to be produced through post-translational modifications, possibly by phosphorylation. In terms of tissue distribution, found only in indirect flight muscles (IFM).

Possibly involved in the regulation of flight muscles contraction, possibly by modulating actin-myosin interaction. The sequence is that of Flightin (fln) from Drosophila melanogaster (Fruit fly).